A 448-amino-acid polypeptide reads, in one-letter code: Exodeoxyribonuclease 7 large subunit (448 aa).

The protein belongs to the XseA family. In terms of assembly, heterooligomer composed of large and small subunits.

It localises to the cytoplasm. Its subcellular location is the nucleoid. The enzyme catalyses Exonucleolytic cleavage in either 5'- to 3'- or 3'- to 5'-direction to yield nucleoside 5'-phosphates.. Functionally, bidirectionally degrades single-stranded DNA into large acid-insoluble oligonucleotides, which are then degraded further into small acid-soluble oligonucleotides. The protein is Exodeoxyribonuclease 7 large subunit of Bacillus subtilis (strain 168).